Here is a 902-residue protein sequence, read N- to C-terminus: Protein translocase subunit SecA (902 aa).

ATP is bound by residues Gln87, 105-109 (GEGKT), and Asp512. The interval 836–902 (DVEKVEEQHR…KFKQCCGKLK (67 aa)) is disordered. Basic and acidic residues predominate over residues 840–863 (VEEQHRKSENAPREYQHEEVEHVG). Cys886, Cys888, Cys897, and Cys898 together coordinate Zn(2+).

Belongs to the SecA family. Monomer and homodimer. Part of the essential Sec protein translocation apparatus which comprises SecA, SecYEG and auxiliary proteins SecDF-YajC and YidC. Requires Zn(2+) as cofactor.

The protein resides in the cell inner membrane. The protein localises to the cytoplasm. It catalyses the reaction ATP + H2O + cellular proteinSide 1 = ADP + phosphate + cellular proteinSide 2.. Its function is as follows. Part of the Sec protein translocase complex. Interacts with the SecYEG preprotein conducting channel. Has a central role in coupling the hydrolysis of ATP to the transfer of proteins into and across the cell membrane, serving both as a receptor for the preprotein-SecB complex and as an ATP-driven molecular motor driving the stepwise translocation of polypeptide chains across the membrane. This chain is Protein translocase subunit SecA, found in Pseudoalteromonas translucida (strain TAC 125).